Here is a 472-residue protein sequence, read N- to C-terminus: Phenylalanine--tRNA ligase, mitochondrial (472 aa).

Residues 157-160, Arg179, 186-188, and 193-195 each bind substrate; these read SAHQ, QHY, and QLE. Lys202 is modified (N6-acetyllysine). Positions 287 and 312 each coordinate substrate. One can recognise an FDX-ACB domain in the interval 379-471; that stretch reads SKYPAVFNDI…AVQLLGVEGR (93 aa).

Belongs to the class-II aminoacyl-tRNA synthetase family. In terms of assembly, monomer. Mainly expressed in the Purkinje cell of cerebellum.

It localises to the mitochondrion matrix. It is found in the mitochondrion. The catalysed reaction is tRNA(Phe) + L-phenylalanine + ATP = L-phenylalanyl-tRNA(Phe) + AMP + diphosphate + H(+). Functionally, is responsible for the charging of tRNA(Phe) with phenylalanine in mitochondrial translation. To a lesser extent, also catalyzes direct attachment of m-Tyr (an oxidized version of Phe) to tRNA(Phe), thereby opening the way for delivery of the misacylated tRNA to the ribosome and incorporation of ROS-damaged amino acid into proteins. This is Phenylalanine--tRNA ligase, mitochondrial (Fars2) from Rattus norvegicus (Rat).